A 411-amino-acid polypeptide reads, in one-letter code: Multidrug resistance protein MdtG (411 aa).

The next 11 helical transmembrane spans lie at Leu17 to Phe37, Leu59 to Ala79, Ala92 to Leu112, Ala116 to Val136, Trp147 to Ala167, Pro174 to Val194, Val222 to Ile242, Leu257 to Pro277, Ile291 to Asn311, Phe320 to Asn340, and Ala379 to Leu399.

The protein belongs to the major facilitator superfamily. DHA1 family. MdtG (TC 2.A.1.2.20) subfamily.

Its subcellular location is the cell inner membrane. The polypeptide is Multidrug resistance protein MdtG (Erwinia billingiae (strain Eb661)).